We begin with the raw amino-acid sequence, 126 residues long: Non-specific lipid-transfer protein 13 (126 aa).

The N-terminal stretch at 1–20 is a signal peptide; sequence MDTHTTKLVAISLLLLLVIS. Intrachain disulfides connect C36–C85, C46–C61, C62–C109, and C83–C123.

The protein belongs to the plant LTP family.

Functionally, plant non-specific lipid-transfer proteins transfer phospholipids as well as galactolipids across membranes. May play a role in wax or cutin deposition in the cell walls of expanding epidermal cells and certain secretory tissues. In Arabidopsis thaliana (Mouse-ear cress), this protein is Non-specific lipid-transfer protein 13 (LTP13).